The sequence spans 996 residues: Leucine-rich repeat receptor-like kinase protein THICK TASSEL DWARF1 (996 aa).

A signal peptide spans 1–26 (MPPPTFLLGLLLLLLLAAAAPAPASA). 21 LRR repeats span residues 78 to 103 (TSRV…VALL), 104 to 127 (DALA…LASM), 128 to 151 (PALR…PPAA), 153 to 178 (FPAL…APHA), 180 to 201 (SLRY…TFGD), 202 to 226 (LAAL…LSRL), 251 to 275 (LQSL…LARL), 276 to 299 (SRLD…LGAL), 300 to 323 (TSLR…FAAL), 325 to 349 (NLKL…DFPF), 351 to 371 (EVLQ…LGRN), 372 to 395 (GRLK…LCAG), 397 to 419 (NLQL…LGDC), 420 to 443 (KTLT…LFDL), 445 to 466 (QANM…VIAG), 467 to 490 (DKIG…IGNL), 491 to 514 (PALQ…IGRL), 516 to 538 (NLTR…LMGC), 539 to 562 (ASLG…VTSL), 563 to 586 (KILC…MANM), and 587 to 611 (TSLT…QFLV). The helical transmembrane segment at 646 to 666 (KKLLVWLVVLLTLLVLAVLGA) threads the bilayer. In terms of domain architecture, Protein kinase spans 703–978 (LKEDNIIGKG…TMREVVHMLS (276 aa)). ATP contacts are provided by residues 709–717 (IGKGGAGIV) and Lys731. Asp828 serves as the catalytic Proton acceptor.

This sequence belongs to the protein kinase superfamily. Ser/Thr protein kinase family. In terms of tissue distribution, highly expressed in the apex of the vegetative seedlings. Lower expression in young leaves, ears and tassels, embryos and roots. Not expressed in the shoot meristem itself. Detected in the three outermost layers of the inflorescence meristem, and on its flanks at positions of prospective spikelet pair meristems. Not confined to meristematic cells but also detected in primordia of glumes, lemmas and stamens.

The protein resides in the membrane. It carries out the reaction L-seryl-[protein] + ATP = O-phospho-L-seryl-[protein] + ADP + H(+). It catalyses the reaction L-threonyl-[protein] + ATP = O-phospho-L-threonyl-[protein] + ADP + H(+). Functionally, receptor-like kinase protein that regulates meristem size during inflorescence and flower development. Promotes vegetative meristem growth and restricts inflorescence and floral meristem growth. Based on additive and synergistic phenotypes of double mutants, it is probable that unlike CLV1 and CLV2 in A.thaliana, TD1 and FAE2 do not function exclusively in a single pathway. However, KN-1 and TD1 do function in a linear pathway to maintain vegetative meristem homeostasis, but they may interact with different partners during development. The sequence is that of Leucine-rich repeat receptor-like kinase protein THICK TASSEL DWARF1 (TD1) from Zea mays (Maize).